The primary structure comprises 179 residues: Large ribosomal subunit protein uL6 (179 aa).

This sequence belongs to the universal ribosomal protein uL6 family. As to quaternary structure, part of the 50S ribosomal subunit.

This protein binds to the 23S rRNA, and is important in its secondary structure. It is located near the subunit interface in the base of the L7/L12 stalk, and near the tRNA binding site of the peptidyltransferase center. This chain is Large ribosomal subunit protein uL6, found in Acidobacterium capsulatum (strain ATCC 51196 / DSM 11244 / BCRC 80197 / JCM 7670 / NBRC 15755 / NCIMB 13165 / 161).